We begin with the raw amino-acid sequence, 760 residues long: Xaa-Pro dipeptidyl-peptidase (760 aa).

Catalysis depends on charge relay system residues serine 349, aspartate 469, and histidine 499.

It belongs to the peptidase S15 family. Homodimer.

The protein resides in the cytoplasm. The catalysed reaction is Hydrolyzes Xaa-Pro-|- bonds to release unblocked, N-terminal dipeptides from substrates including Ala-Pro-|-p-nitroanilide and (sequentially) Tyr-Pro-|-Phe-Pro-|-Gly-Pro-|-Ile.. In terms of biological role, removes N-terminal dipeptides sequentially from polypeptides having unsubstituted N-termini provided that the penultimate residue is proline. In Streptococcus pyogenes serotype M1, this protein is Xaa-Pro dipeptidyl-peptidase.